The following is a 238-amino-acid chain: MGSTSGIGLIPNNRTARNLLQLLNHPTIEKRLINKDYEAVGMIPVGTANMVMKTKKISKVAQLRGQRIGVLANNPPQQALVRSVGAQPVYVDLSNAIAQFQQNKIDIMPAPVYGLLPYNLQKDFGPDTQVINFPLAYFGVNIIIKPQAYPANFGRKIRAWFVQNSQLLTNRAIQWENHLPAYYWVDVSFYEKQSYDIMVAKIRNQYVRSGYYDAYFVELMKRLRCIDDPRYFECPMSR.

The protein belongs to the bacterial solute-binding protein 7 family.

Its function is as follows. Mediates antimicrobial resistance via active efflux. Contributes to resistance to antibiotics such as chloramphenicol, erythromycin and novobiocin. May be part of a tripartite ATP-independent periplasmic (TRAP) transport system. This is Probable solute-binding protein AdeT2 from Acinetobacter baumannii.